A 78-amino-acid chain; its full sequence is MSRRKREEPWRYEAAIAEVETLIAQIESGELDLAEVVERFQQAAQTLKTCADFLEQKRQQVEIIIEQLGQEEEDLPES.

Belongs to the XseB family. Heterooligomer composed of large and small subunits.

The protein localises to the cytoplasm. It carries out the reaction Exonucleolytic cleavage in either 5'- to 3'- or 3'- to 5'-direction to yield nucleoside 5'-phosphates.. Functionally, bidirectionally degrades single-stranded DNA into large acid-insoluble oligonucleotides, which are then degraded further into small acid-soluble oligonucleotides. This is Exodeoxyribonuclease 7 small subunit from Synechococcus sp. (strain JA-2-3B'a(2-13)) (Cyanobacteria bacterium Yellowstone B-Prime).